Reading from the N-terminus, the 468-residue chain is Gasdermin-C (468 aa).

The interval 1 to 230 (MSYTFDWLSK…CVILTSANTK (230 aa)) is triggers pyroptosis.

It belongs to the gasdermin family. Homooligomer; homooligomeric ring-shaped pore complex containing 27-28 subunits when inserted in the membrane. Post-translationally, cleavage by CASP8 relieves autoinhibition by releasing the N-terminal moiety (Gasdermin-C, N-terminal) that initiates pyroptosis. Palmitoylated.

Its subcellular location is the cytoplasm. The protein resides in the cytosol. It localises to the cell membrane. With respect to regulation, the full-length protein before cleavage is inactive: intramolecular interactions between N- and C-terminal domains mediate autoinhibition in the absence of activation signal. The intrinsic pyroptosis-inducing activity is carried by the released N-terminal moiety (Gasdermin-C, N-terminal) following cleavage by caspase CASP8. Its function is as follows. This form constitutes the precursor of the pore-forming protein: upon cleavage, the released N-terminal moiety (Gasdermin-C, N-terminal) binds to membranes and forms pores, triggering pyroptosis. Pore-forming protein that causes membrane permeabilization and pyroptosis. Produced by the cleavage of gasdermin-C by caspase CASP8 in response to death signals. After cleavage, moves to the plasma membrane where it strongly binds to membrane inner leaflet lipids. Homooligomerizes within the membrane and forms pores of 10-15 nanometers (nm) of inner diameter, triggering pyroptosis. The chain is Gasdermin-C from Mus musculus (Mouse).